Reading from the N-terminus, the 411-residue chain is NADH-quinone oxidoreductase subunit H (411 aa).

9 helical membrane passes run 18–38 (LAKSLGIFAFLLLTVLAAILI), 84–104 (WIYLAAPIISVIPAFMAFAVI), 124–144 (LPVAVLYILAVTSIGVYGIVL), 165–185 (VISYEIAMALSFAAVFIYAGT), 198–218 (TWYIVLLLPSFLVYVTAMVGE), 260–280 (VSALATTLFLGGWHAPWPISI), 288–308 (WWPLLWFTVKVWLFLFFFMWL), 321–341 (MALGWKILIPVSLGWIMIVAI), and 352–372 (APATAAIGLAVAAVILLALLG).

Belongs to the complex I subunit 1 family. NDH-1 is composed of 14 different subunits. Subunits NuoA, H, J, K, L, M, N constitute the membrane sector of the complex.

Its subcellular location is the cell membrane. It carries out the reaction a quinone + NADH + 5 H(+)(in) = a quinol + NAD(+) + 4 H(+)(out). Its function is as follows. NDH-1 shuttles electrons from NADH, via FMN and iron-sulfur (Fe-S) centers, to quinones in the respiratory chain. The immediate electron acceptor for the enzyme in this species is believed to be menaquinone. Couples the redox reaction to proton translocation (for every two electrons transferred, four hydrogen ions are translocated across the cytoplasmic membrane), and thus conserves the redox energy in a proton gradient. This subunit may bind ubiquinone. The sequence is that of NADH-quinone oxidoreductase subunit H from Mycolicibacterium vanbaalenii (strain DSM 7251 / JCM 13017 / BCRC 16820 / KCTC 9966 / NRRL B-24157 / PYR-1) (Mycobacterium vanbaalenii).